A 64-amino-acid polypeptide reads, in one-letter code: Translational regulator CsrA (64 aa).

The protein belongs to the CsrA/RsmA family. As to quaternary structure, homodimer; the beta-strands of each monomer intercalate to form a hydrophobic core, while the alpha-helices form wings that extend away from the core.

It localises to the cytoplasm. A key translational regulator that binds mRNA to regulate translation initiation and/or mRNA stability. Mediates global changes in gene expression, shifting from rapid growth to stress survival by linking envelope stress, the stringent response and the catabolite repression systems. Usually binds in the 5'-UTR; binding at or near the Shine-Dalgarno sequence prevents ribosome-binding, repressing translation, binding elsewhere in the 5'-UTR can activate translation and/or stabilize the mRNA. Its function is antagonized by small RNA(s). This is Translational regulator CsrA from Dichelobacter nodosus (strain VCS1703A).